Consider the following 188-residue polypeptide: Elongation factor P (188 aa).

This sequence belongs to the elongation factor P family.

It is found in the cytoplasm. The protein operates within protein biosynthesis; polypeptide chain elongation. Its function is as follows. Involved in peptide bond synthesis. Stimulates efficient translation and peptide-bond synthesis on native or reconstituted 70S ribosomes in vitro. Probably functions indirectly by altering the affinity of the ribosome for aminoacyl-tRNA, thus increasing their reactivity as acceptors for peptidyl transferase. The sequence is that of Elongation factor P from Bacteroides fragilis (strain ATCC 25285 / DSM 2151 / CCUG 4856 / JCM 11019 / LMG 10263 / NCTC 9343 / Onslow / VPI 2553 / EN-2).